The chain runs to 546 residues: Pre-mRNA-splicing factor 38B (546 aa).

Over residues 1 to 14 (MANNSPALTGNSQP) the composition is skewed to polar residues. The interval 1 to 40 (MANNSPALTGNSQPQHQAAAAAAQQQQQCGGGGATKPAVS) is disordered. Ala2 carries the post-translational modification N-acetylalanine. A Phosphoserine modification is found at Ser5. Low complexity predominate over residues 15-28 (QHQAAAAAAQQQQQ). Lys227 bears the N6-acetyllysine mark. A disordered region spans residues 229-546 (IDQQIKTRPR…KQHKNKDETV (318 aa)). Basic and acidic residues predominate over residues 243-255 (DGKEGAEEIDRHV). Residues 256–284 (ERRRSRSPRRSLSPRRSPRRSRSRSHHRE) are compositionally biased toward basic residues. Residues Ser288, Ser290, Ser318, and Ser320 each carry the phosphoserine modification. The segment covering 291 to 327 (FDRELEREKERQRLEREAKEREKERRRSRSIDRGLER) has biased composition (basic and acidic residues). Residues 292–321 (DRELEREKERQRLEREAKEREKERRRSRSI) adopt a coiled-coil conformation. The segment covering 328–344 (RRSRSRERHRSRSRSRD) has biased composition (basic residues). Basic and acidic residues predominate over residues 345-421 (RKGDRRDRDR…HRDDKRDSKK (77 aa)). Residues 422-450 (EKKHSRSRSRERKHRSRSRSRNAGKRSRS) show a composition bias toward basic residues. A Phosphoserine modification is found at Ser448. Residues 451-468 (RSKEKSSKHKNESKEKSN) show a composition bias toward basic and acidic residues. Phosphoserine occurs at positions 473, 475, and 481. A compositionally biased stretch (basic and acidic residues) spans 480–495 (DSVEKSKKREHSPSKE). The span at 496–510 (KSRKRSRSKERSHKR) shows a compositional bias: basic residues. Residues 511–546 (DHSDSKDQSDKHDRRRSQSIEQESQEKQHKNKDETV) are compositionally biased toward basic and acidic residues. Ser527, Ser529, and Ser534 each carry phosphoserine.

This sequence belongs to the PRP38 family.

Its subcellular location is the nucleus. May be required for pre-mRNA splicing. This is Pre-mRNA-splicing factor 38B (PRPF38B) from Homo sapiens (Human).